Here is a 55-residue protein sequence, read N- to C-terminus: Large ribosomal subunit protein bL32 (55 aa).

Residues 1–19 (MAVPKFKKSRANTRARRSQ) show a composition bias toward basic residues. The interval 1–22 (MAVPKFKKSRANTRARRSQWKA) is disordered.

Belongs to the bacterial ribosomal protein bL32 family.

In Corynebacterium urealyticum (strain ATCC 43042 / DSM 7109), this protein is Large ribosomal subunit protein bL32.